We begin with the raw amino-acid sequence, 411 residues long: Snake venom metalloproteinase ACLF (411 aa).

The first 20 residues, 1 to 20, serve as a signal peptide directing secretion; it reads MIQVLLVTLCLAAFPYQGSS. A propeptide spanning residues 21–189 is cleaved from the precursor; that stretch reads IILESGNVND…KKAFQLNLTP (169 aa). A Peptidase M12B domain is found at 197–393; that stretch reads RYVELVIVAD…NNPQCILNKP (197 aa). Residues E200 and D284 each coordinate Ca(2+). Disulfide bonds link C308–C388, C348–C372, and C350–C355. H333 contributes to the Zn(2+) binding site. Residue E334 is part of the active site. Residues H337 and H343 each contribute to the Zn(2+) site. Residues C388, N391, V403, N406, L408, and E410 each contribute to the Ca(2+) site.

The protein belongs to the venom metalloproteinase (M12B) family. P-I subfamily. As to quaternary structure, monomer. It depends on Zn(2+) as a cofactor. Expressed by the venom gland.

The protein resides in the secreted. Inhibited by EDTA and 1,10-phenanthroline, but not by PMSF. Snake venom zinc metalloprotease that has fibrinolytic activity. The recombinant enzyme cleaves both alpha- and beta-chains of fibrinogen, but not the gamma-chain. The recombinant protein does not produce hemorrhage in mice. Cleaves the peptide substrate Abz-LVEALYQ-EDDnp at the Ala-Leu bond in vitro. The polypeptide is Snake venom metalloproteinase ACLF (ACLPREF) (Agkistrodon contortrix laticinctus (Broad-banded copperhead)).